Reading from the N-terminus, the 685-residue chain is RING finger protein 145 (685 aa).

13 helical membrane passes run 53–73, 77–97, 123–143, 151–171, 174–194, 225–245, 275–295, 316–336, 340–360, 384–404, 410–430, 460–480, and 482–502; these read YIAL…LTLP, LVQL…HQLS, FTTA…VMQT, AHLL…IVFI, FAMI…LLVP, LVLP…QIYT, YSLL…LTLC, TEGI…LQVI, FLLS…MLEI, SLCL…CQFF, LLII…TLLI, LLEF…TLFG, and WTVM…WLRA. The RING-type; atypical zinc-finger motif lies at 537-575; the sequence is CSICFQDMKSAVITPCSHFFHAACLKKWLYVQETCPLCH. Positions 582-685 are disordered; the sequence is LQPTSSPGTP…VSTSDVNCAS (104 aa). Positions 583 to 602 are enriched in low complexity; that stretch reads QPTSSPGTPTQGTPAANQNP. The segment covering 620–631 has biased composition (basic and acidic residues); sequence EGIRAEEMKTSA.

Its subcellular location is the membrane. The protein is RING finger protein 145 (rnf145) of Danio rerio (Zebrafish).